Here is a 500-residue protein sequence, read N- to C-terminus: Putative antiporter subunit mnhD2 (500 aa).

The next 14 helical transmembrane spans lie at 2 to 22 (MSNL…ILVF), 32 to 52 (ILSI…LIYV), 78 to 98 (LSLL…AYGF), 108 to 128 (FHLP…FLTS), 130 to 150 (LFNL…LVTL), 161 to 181 (IVYV…IGML), 209 to 229 (ISLV…FMWL), 240 to 260 (LAAL…IRFF), 273 to 293 (TLLV…VIAY), 308 to 328 (IGFI…GAIF), 330 to 350 (LAND…LVYM), 368 to 388 (FFGV…PFSG), 403 to 423 (GNYI…YSLF), and 450 to 470 (GLLS…PVVL).

Belongs to the CPA3 antiporters (TC 2.A.63) subunit D family. May form a heterooligomeric complex that consists of seven subunits: mnhA2, mnhB2, mnhC2, mnhD2, mnhE2, mnhF2 and mnhG2.

It is found in the cell membrane. The protein is Putative antiporter subunit mnhD2 (mnhD2) of Staphylococcus epidermidis (strain ATCC 12228 / FDA PCI 1200).